The chain runs to 541 residues: Zinc finger protein 513 (541 aa).

The tract at residues 1–120 is disordered; that stretch reads MPRRKQSHPQ…ARGERPGPAC (120 aa). Residues 44-55 are compositionally biased toward acidic residues; that stretch reads LEFEEEEEEEEG. Phosphoserine is present on residues S85 and S96. Residues 103-115 are compositionally biased toward basic and acidic residues; sequence EPARGPGEARGER. 8 C2H2-type zinc fingers span residues 150–172, 178–200, 206–228, 360–382, 388–410, 416–438, 444–466, and 472–494; these read YSCR…MQTH, FRCG…TRTH, YRCP…QRTH, FACS…MKTH, FRCA…QRVH, YKCP…GRIH, FRCS…MLRH, and FRCA…QKVH. The disordered stretch occupies residues 492-541; sequence KVHGHGGAGGPGLSAPEGWAPPHSPPSVLSTRGSAALGATGSRALHTDSP.

This sequence belongs to the krueppel C2H2-type zinc-finger protein family. In terms of assembly, binds DNA. Can associate with the proximal promoter regions of PAX6 and SP4, and their known targets including ARR3, RHO, OPN1MW2 and OPN1SW.

The protein localises to the nucleus. Functionally, transcriptional regulator that plays a role in retinal development and maintenance. The sequence is that of Zinc finger protein 513 (Znf513) from Rattus norvegicus (Rat).